The primary structure comprises 367 residues: NADH-quinone oxidoreductase subunit D (367 aa).

It belongs to the complex I 49 kDa subunit family. NDH-1 is composed of 14 different subunits. Subunits NuoB, C, D, E, F, and G constitute the peripheral sector of the complex.

The protein resides in the cell membrane. It carries out the reaction a quinone + NADH + 5 H(+)(in) = a quinol + NAD(+) + 4 H(+)(out). Functionally, NDH-1 shuttles electrons from NADH, via FMN and iron-sulfur (Fe-S) centers, to quinones in the respiratory chain. The immediate electron acceptor for the enzyme in this species is believed to be a menaquinone. Couples the redox reaction to proton translocation (for every two electrons transferred, four hydrogen ions are translocated across the cytoplasmic membrane), and thus conserves the redox energy in a proton gradient. The polypeptide is NADH-quinone oxidoreductase subunit D (Geobacillus kaustophilus (strain HTA426)).